The following is a 404-amino-acid chain: Cysteine desulfurase IscS (404 aa).

Pyridoxal 5'-phosphate contacts are provided by residues 75 to 76, asparagine 155, glutamine 183, and 203 to 205; these read AT and SAH. An N6-(pyridoxal phosphate)lysine modification is found at lysine 206. Threonine 243 contacts pyridoxal 5'-phosphate. The active-site Cysteine persulfide intermediate is the cysteine 328. Cysteine 328 is a binding site for [2Fe-2S] cluster.

This sequence belongs to the class-V pyridoxal-phosphate-dependent aminotransferase family. NifS/IscS subfamily. In terms of assembly, homodimer. Forms a heterotetramer with IscU, interacts with other sulfur acceptors. Pyridoxal 5'-phosphate is required as a cofactor.

It is found in the cytoplasm. The enzyme catalyses (sulfur carrier)-H + L-cysteine = (sulfur carrier)-SH + L-alanine. The protein operates within cofactor biosynthesis; iron-sulfur cluster biosynthesis. Functionally, master enzyme that delivers sulfur to a number of partners involved in Fe-S cluster assembly, tRNA modification or cofactor biosynthesis. Catalyzes the removal of elemental sulfur atoms from cysteine to produce alanine. Functions as a sulfur delivery protein for Fe-S cluster synthesis onto IscU, an Fe-S scaffold assembly protein, as well as other S acceptor proteins. In Pseudomonas entomophila (strain L48), this protein is Cysteine desulfurase IscS.